A 690-amino-acid chain; its full sequence is Eukaryotic translation initiation factor 3 subunit B (690 aa).

Over residues 1–11 (MAKKKSEEHSG) the composition is skewed to basic and acidic residues. The segment at 1–36 (MAKKKSEEHSGADANDSDYQEEPNFEDPPGFVDNIS) is disordered. Over residues 15–25 (NDSDYQEEPNF) the composition is skewed to acidic residues. The RRM domain maps to 57-141 (SVVVVDNIPK…HTFAVNLFTD (85 aa)). 5 WD repeats span residues 207-246 (TRERFTDTFVKWSPLGTYVVTFHKPGVAIWGGSSFQKIQK), 293-331 (DGMSVLSMFRWSHDDKFVARMGENSIHIYETPSFFLLDL), 334-369 (IKIPGIRGFSWSPTDNVIAYWVEEQNQIPARVTLME), 442-484 (EIRE…KPSL), and 530-575 (PDHF…IKRT). A coiled-coil region spans residues 595-645 (EEKQKEIKKNLKKYYAAFEQKDRLRLTRASKELLEKRSQLRETFMEYRNKR).

This sequence belongs to the eIF-3 subunit B family. As to quaternary structure, component of the eukaryotic translation initiation factor 3 (eIF-3) complex. The eIF-3 complex interacts with pix. Interacts with mxt.

The protein localises to the cytoplasm. RNA-binding component of the eukaryotic translation initiation factor 3 (eIF-3) complex, which is involved in protein synthesis of a specialized repertoire of mRNAs and, together with other initiation factors, stimulates binding of mRNA and methionyl-tRNAi to the 40S ribosome. The eIF-3 complex specifically targets and initiates translation of a subset of mRNAs involved in cell proliferation. The protein is Eukaryotic translation initiation factor 3 subunit B of Drosophila erecta (Fruit fly).